A 386-amino-acid polypeptide reads, in one-letter code: Succinate--CoA ligase [ADP-forming] subunit beta (386 aa).

In terms of domain architecture, ATP-grasp spans 9 to 244 (KALLRAAGIK…TTQEDHRETQ (236 aa)). ATP contacts are provided by residues Lys-46, 53–55 (GRG), Glu-100, and Arg-103. 2 residues coordinate Mg(2+): Asn-199 and Asp-213. Residues Asn-264 and 321 to 323 (GIV) each bind substrate.

The protein belongs to the succinate/malate CoA ligase beta subunit family. As to quaternary structure, heterotetramer of two alpha and two beta subunits. Requires Mg(2+) as cofactor.

The enzyme catalyses succinate + ATP + CoA = succinyl-CoA + ADP + phosphate. It catalyses the reaction GTP + succinate + CoA = succinyl-CoA + GDP + phosphate. It functions in the pathway carbohydrate metabolism; tricarboxylic acid cycle; succinate from succinyl-CoA (ligase route): step 1/1. Succinyl-CoA synthetase functions in the citric acid cycle (TCA), coupling the hydrolysis of succinyl-CoA to the synthesis of either ATP or GTP and thus represents the only step of substrate-level phosphorylation in the TCA. The beta subunit provides nucleotide specificity of the enzyme and binds the substrate succinate, while the binding sites for coenzyme A and phosphate are found in the alpha subunit. The protein is Succinate--CoA ligase [ADP-forming] subunit beta of Dichelobacter nodosus (strain VCS1703A).